The chain runs to 92 residues: MAKRTKKVGITGKYGVRYGSSLRRQVKKLEVQQHARYDCSFCGKKAVKRGAAGIWNCSSCKKTVAGGAYTFSTAAAATVRSTIRRLREMAEA.

The segment at 39–60 adopts a C4-type zinc-finger fold; that stretch reads CSFCGKKAVKRGAAGIWNCSSC.

The protein belongs to the eukaryotic ribosomal protein eL43 family.

This is Large ribosomal subunit protein eL43 (RPL43) from Eremothecium gossypii (strain ATCC 10895 / CBS 109.51 / FGSC 9923 / NRRL Y-1056) (Yeast).